The following is a 293-amino-acid chain: MDSQLANPPNAFNYIESHRDEYQLSHDLTEIILQFPSTASQLSARFSRSCMKIDHCVIEYRQQVPINATGSVVVEIHDKRMTDNESLQASWTFPIRCNIDLHYFSSSFFSLKDPIPWKLYYRVSDTNVHQRTHFAKFKGKLKLSTAKHSVDIPFRAPTVKILSKQFSNKDIDFSHVDYGKWERKLIRSASLSKYGLQGPIELKPGESWASKSTIGVSHLDADSDLDSAIHPYKNLNRLGSSVLDPGDSASIIGAQRAQSNITLSIAQLNEIVRSTVNECINNNCIHVQPKSLK.

This sequence belongs to the begomovirus movement protein BC1 family. In terms of assembly, binds to dimeric supercoiled plasmid DNA. In terms of processing, phosphorylated.

The protein localises to the host cell membrane. Its subcellular location is the host microsome membrane. It localises to the host endoplasmic reticulum membrane. In terms of biological role, transports viral genome to neighboring plant cells directly through plasmosdesmata, without any budding. The movement protein allows efficient cell to cell propagation, by bypassing the host cell wall barrier. Begomovirus genome is shuttled out of nucleus by Nuclear shuttle protein (NSP) and the movement protein transports the DNA-NSP complex to cell plasmodesmata and facilitates further movement across the cell wall. This Macroptilium lathyroides (Lima bean) protein is Movement protein BC1.